A 208-amino-acid polypeptide reads, in one-letter code: Imidazoleglycerol-phosphate dehydratase (208 aa).

It belongs to the imidazoleglycerol-phosphate dehydratase family.

It is found in the cytoplasm. The catalysed reaction is D-erythro-1-(imidazol-4-yl)glycerol 3-phosphate = 3-(imidazol-4-yl)-2-oxopropyl phosphate + H2O. The protein operates within amino-acid biosynthesis; L-histidine biosynthesis; L-histidine from 5-phospho-alpha-D-ribose 1-diphosphate: step 6/9. This is Imidazoleglycerol-phosphate dehydratase from Paenarthrobacter aurescens (strain TC1).